The following is a 102-amino-acid chain: NADH-quinone oxidoreductase subunit K (102 aa).

3 helical membrane-spanning segments follow: residues 5–25 (ITHY…GIFL), 31–51 (IIIL…FVAF), and 66–86 (FILT…VVFF).

Belongs to the complex I subunit 4L family. As to quaternary structure, NDH-1 is composed of 14 different subunits. Subunits NuoA, H, J, K, L, M, N constitute the membrane sector of the complex.

Its subcellular location is the cell inner membrane. The catalysed reaction is a quinone + NADH + 5 H(+)(in) = a quinol + NAD(+) + 4 H(+)(out). In terms of biological role, NDH-1 shuttles electrons from NADH, via FMN and iron-sulfur (Fe-S) centers, to quinones in the respiratory chain. The immediate electron acceptor for the enzyme in this species is believed to be ubiquinone. Couples the redox reaction to proton translocation (for every two electrons transferred, four hydrogen ions are translocated across the cytoplasmic membrane), and thus conserves the redox energy in a proton gradient. This chain is NADH-quinone oxidoreductase subunit K, found in Bartonella quintana (strain Toulouse) (Rochalimaea quintana).